A 394-amino-acid chain; its full sequence is Elongation factor Tu (394 aa).

The tr-type G domain occupies 10-204 (KPHVNIGTIG…AVDSYIPQPV (195 aa)). Residues 19–26 (GHVDHGKT) are G1. Residue 19-26 (GHVDHGKT) coordinates GTP. Thr26 lines the Mg(2+) pocket. Positions 60–64 (GITIS) are G2. A G3 region spans residues 81–84 (DCPG). Residues 81–85 (DCPGH) and 136–139 (NKVD) contribute to the GTP site. Positions 136-139 (NKVD) are G4. Residues 174–176 (SAL) are G5.

The protein belongs to the TRAFAC class translation factor GTPase superfamily. Classic translation factor GTPase family. EF-Tu/EF-1A subfamily. In terms of assembly, monomer.

It is found in the cytoplasm. It carries out the reaction GTP + H2O = GDP + phosphate + H(+). In terms of biological role, GTP hydrolase that promotes the GTP-dependent binding of aminoacyl-tRNA to the A-site of ribosomes during protein biosynthesis. This chain is Elongation factor Tu, found in Rickettsia parkeri.